Here is a 382-residue protein sequence, read N- to C-terminus: Lipid-A-disaccharide synthase (382 aa).

It belongs to the LpxB family.

The catalysed reaction is 2-N,3-O-bis[(3R)-3-hydroxytetradecanoyl]-alpha-D-glucosaminyl 1-phosphate + UDP-2-N,3-O-bis[(3R)-3-hydroxytetradecanoyl]-alpha-D-glucosamine = lipid A disaccharide (E. coli) + UDP + H(+). The enzyme catalyses a lipid X + a UDP-2-N,3-O-bis[(3R)-3-hydroxyacyl]-alpha-D-glucosamine = a lipid A disaccharide + UDP + H(+). It participates in glycolipid biosynthesis; lipid IV(A) biosynthesis; lipid IV(A) from (3R)-3-hydroxytetradecanoyl-[acyl-carrier-protein] and UDP-N-acetyl-alpha-D-glucosamine: step 5/6. In terms of biological role, condensation of UDP-2,3-diacylglucosamine and 2,3-diacylglucosamine-1-phosphate to form lipid A disaccharide, a precursor of lipid A, a phosphorylated glycolipid that anchors the lipopolysaccharide to the outer membrane of the cell. In Shigella dysenteriae serotype 1 (strain Sd197), this protein is Lipid-A-disaccharide synthase.